Consider the following 433-residue polypeptide: Protein translocase subunit SecY (433 aa).

10 consecutive transmembrane segments (helical) span residues 17–37 (IIFT…PIPG), 71–91 (IFAL…LMSV), 117–137 (LTVL…ESMV), 141–161 (GPVV…TLVV), 184–204 (LIIF…MFEL), 212–232 (PLIA…IIFF), 268–288 (GVIP…LANF), 310–330 (YILL…AIVF), 366–386 (LTVI…LLMN), and 388–408 (YVIS…VVLD).

The protein belongs to the SecY/SEC61-alpha family. Component of the Sec protein translocase complex. Heterotrimer consisting of SecY, SecE and SecG subunits. The heterotrimers can form oligomers, although 1 heterotrimer is thought to be able to translocate proteins. Interacts with the ribosome. Interacts with SecDF, and other proteins may be involved. Interacts with SecA.

It localises to the cell inner membrane. The central subunit of the protein translocation channel SecYEG. Consists of two halves formed by TMs 1-5 and 6-10. These two domains form a lateral gate at the front which open onto the bilayer between TMs 2 and 7, and are clamped together by SecE at the back. The channel is closed by both a pore ring composed of hydrophobic SecY resides and a short helix (helix 2A) on the extracellular side of the membrane which forms a plug. The plug probably moves laterally to allow the channel to open. The ring and the pore may move independently. This Rickettsia typhi (strain ATCC VR-144 / Wilmington) protein is Protein translocase subunit SecY.